Reading from the N-terminus, the 310-residue chain is Ribosomal protein uL3 glutamine methyltransferase (310 aa).

This sequence belongs to the protein N5-glutamine methyltransferase family. PrmB subfamily.

It catalyses the reaction L-glutaminyl-[ribosomal protein uL3] + S-adenosyl-L-methionine = N(5)-methyl-L-glutaminyl-[ribosomal protein uL3] + S-adenosyl-L-homocysteine + H(+). Its function is as follows. Specifically methylates large ribosomal subunit protein uL3 on 'Gln-150'. The sequence is that of Ribosomal protein uL3 glutamine methyltransferase from Shigella dysenteriae serotype 1 (strain Sd197).